We begin with the raw amino-acid sequence, 637 residues long: Biosynthetic arginine decarboxylase (637 aa).

An N6-(pyridoxal phosphate)lysine modification is found at Lys-101. A substrate-binding site is contributed by 286–296 (VDIGGGLGVDY).

This sequence belongs to the Orn/Lys/Arg decarboxylase class-II family. SpeA subfamily. The cofactor is Mg(2+). Pyridoxal 5'-phosphate is required as a cofactor.

It carries out the reaction L-arginine + H(+) = agmatine + CO2. It functions in the pathway amine and polyamine biosynthesis; agmatine biosynthesis; agmatine from L-arginine: step 1/1. Its function is as follows. Catalyzes the biosynthesis of agmatine from arginine. This Marinobacter nauticus (strain ATCC 700491 / DSM 11845 / VT8) (Marinobacter aquaeolei) protein is Biosynthetic arginine decarboxylase.